A 130-amino-acid chain; its full sequence is Biotin carboxyl carrier protein (130 aa).

A disordered region spans residues 20-64; the sequence is EISESSVPAATPITPTTENTRAASDQKQQSQTPSPAATASAANTM. A compositionally biased stretch (polar residues) spans 23–46; sequence ESSVPAATPITPTTENTRAASDQK. Over residues 47-64 the composition is skewed to low complexity; the sequence is QQSQTPSPAATASAANTM. A Biotinyl-binding domain is found at 55–130; that stretch reads AATASAANTM…NAGDNLITIA (76 aa). An N6-biotinyllysine modification is found at K96.

In Streptococcus mutans serotype c (strain ATCC 700610 / UA159), this protein is Biotin carboxyl carrier protein (bcc).